Here is a 311-residue protein sequence, read N- to C-terminus: Glutaminase (311 aa).

Substrate contacts are provided by S66, N116, E162, N169, Y193, Y245, and V263.

The protein belongs to the glutaminase family. As to quaternary structure, homotetramer.

The enzyme catalyses L-glutamine + H2O = L-glutamate + NH4(+). This Rhodopseudomonas palustris (strain TIE-1) protein is Glutaminase.